Here is a 384-residue protein sequence, read N- to C-terminus: PqqA peptide cyclase (384 aa).

A Radical SAM core domain is found at 14 to 226 (IPAPVGLLAE…IRIVEAARER (213 aa)). Positions 28, 32, and 35 each coordinate [4Fe-4S] cluster.

Belongs to the radical SAM superfamily. PqqE family. As to quaternary structure, interacts with PqqD. The interaction is necessary for activity of PqqE. The cofactor is [4Fe-4S] cluster.

It carries out the reaction [PQQ precursor protein] + S-adenosyl-L-methionine = E-Y cross-linked-[PQQ precursor protein] + 5'-deoxyadenosine + L-methionine + H(+). It functions in the pathway cofactor biosynthesis; pyrroloquinoline quinone biosynthesis. In terms of biological role, catalyzes the cross-linking of a glutamate residue and a tyrosine residue in the PqqA protein as part of the biosynthesis of pyrroloquinoline quinone (PQQ). The polypeptide is PqqA peptide cyclase (Methylorubrum populi (strain ATCC BAA-705 / NCIMB 13946 / BJ001) (Methylobacterium populi)).